The sequence spans 853 residues: MIKVTIDEQSLEVEAGSTVLAAAERLGIEIPTFCYWKRLPPLASCRMCLVEIEGLRRLQPACATVAADGMVVRTNTPLIEETRSSMLDMLLANHPLDCPICDKGGECELQDMVMAYGPGESRFRDPKRVFHSKDIRLSPVIIMNVNRCIQCQRCVRMCEEVVGAVALGTVEKGMDTAVTGFEGSLASCDQCGNCVEVCPVGALMSFPYRYKARPWDLAETDTICPHCGTGCQLTVGARKGEFMRVRSDWEHGVNRETLCVRGRFGLDFIESRDRIKRPMIRRDGTLTPVSWEEAGDFLRQRLGVAEGKAAGGLISPRLPNEVLYQFQKLMRTVLRTNNVDCSSRWSAPLDILVPIVASFYSRDPLEQVIGKDCVLIIGGNVTEENPVTEYLLRDAARRRHTRLLMLSARPSRLDADARAVLRAHPGGEGQSLAAVVAALVAVTDEGLPDDIFAKTSGTTASSGANDALDRLVSTLKEGRSVTLLVSVDLLRSPLARKTLEQLGNLLQLLRLLGKEPSLQFLFDRANQMGAWDMGVLPGVLPGLSPIADEATRTRFERSWGAEIPREPGADVDAMLELCEKGGMGVLYVVGSDPLISYPDREFVERALGAANLLIVQDAFLTDTAGLADVVLPAAGYGEESGTFTNNEGRTQALRKFREPAFDARSNLAIFGFIAALRERPLQPSTETVIFEEMTRLVPAYEGLTWEGLGADGAFTTSAPKPWTSGFFAPLSAPAVTDVLQLITGNCLFHNGYVSEHSETLNSVADDPFIEMSAQDAAGLSLSDGDQVLVRSARGELTAKLKVNRRFPHGLVFVPENYRALRLNSLMRRGEYPCPVEIRECAKRAASALDEERV.

Positions Met1–Leu78 constitute a 2Fe-2S ferredoxin-type domain. [2Fe-2S] cluster is bound by residues Cys34, Cys45, Cys48, and Cys62. One can recognise a 4Fe-4S His(Cys)3-ligated-type domain in the interval Leu78–Gly117. [4Fe-4S] cluster contacts are provided by His94, Cys98, Cys101, Cys107, Cys148, Cys151, Cys154, Cys198, Cys224, Cys227, Cys231, and Cys259. 4Fe-4S ferredoxin-type domains are found at residues Pro139–Val170 and Thr179–Arg209. Residues Leu217–Asp273 enclose the 4Fe-4S Mo/W bis-MGD-type domain.

This sequence belongs to the complex I 75 kDa subunit family. [2Fe-2S] cluster is required as a cofactor. The cofactor is [4Fe-4S] cluster.

It carries out the reaction a quinone + NADH + 5 H(+)(in) = a quinol + NAD(+) + 4 H(+)(out). Its function is as follows. NDH-1 shuttles electrons from NADH, via FMN and iron-sulfur (Fe-S) centers, to quinones in the respiratory chain. The immediate electron acceptor for the enzyme in this species is believed to be ubiquinone. Couples the redox reaction to proton translocation (for every two electrons transferred, four hydrogen ions are translocated across the cytoplasmic membrane), and thus conserves the redox energy in a proton gradient. This Rhizobium meliloti (strain 1021) (Ensifer meliloti) protein is NADH-quinone oxidoreductase subunit G 2 (nuoG2).